The primary structure comprises 21 residues: 5-methyltetrahydropteroyltriglutamate--homocysteine methyltransferase (21 aa).

Belongs to the vitamin-B12 independent methionine synthase family. Zn(2+) is required as a cofactor.

Its subcellular location is the cytoplasm. It carries out the reaction 5-methyltetrahydropteroyltri-L-glutamate + L-homocysteine = tetrahydropteroyltri-L-glutamate + L-methionine. It functions in the pathway amino-acid biosynthesis; L-methionine biosynthesis via de novo pathway; L-methionine from L-homocysteine (MetE route): step 1/1. Functionally, catalyzes the transfer of a methyl group from 5-methyltetrahydrofolate to homocysteine resulting in methionine formation. The chain is 5-methyltetrahydropteroyltriglutamate--homocysteine methyltransferase from Populus euphratica (Euphrates poplar).